The sequence spans 608 residues: RAS guanyl-releasing protein 2 (608 aa).

The N-terminal Ras-GEF domain occupies 4 to 126 (TLDLDKGCTV…SLIDIESVPT (123 aa)). Phosphoserine is present on residues S116, S117, and S147. The region spanning 154-387 (EPMELAEHLT…YQLSLQREPR (234 aa)) is the Ras-GEF domain. The segment at 382-405 (LQREPRSKSSPTSPTSCTPPPRPP) is disordered. EF-hand domains are found at residues 426-461 (HIEK…FPYL) and 463-490 (AFGD…SSSV). Positions 439, 441, 443, 445, 450, 468, 470, 472, 474, and 479 each coordinate Ca(2+). The Phorbol-ester/DAG-type zinc-finger motif lies at 498–548 (VHNFQESNSLRPVACRHCKALILGIYKQGLKCRACGVNCHKQCKERLSVEC). Phosphoserine is present on residues S554 and S575. The interval 555–596 (VSLEGSAPSPSPTHTHHRAFSFSLPRPGRRSSRPPEIREEEV) is disordered.

This sequence belongs to the RASGRP family. As to quaternary structure, forms a signaling complex with RAP1 and BRAF. Interacts with F-actin. Interacts with RAP1. In terms of tissue distribution, detected in megakaryocytes, platelet and neutrophils but not in lymphocytes (at protein level). Isoform 1 and isoform 3 are detected in brain basal glanglia, heart, lung, spleen, liver and kidney interstitial cells.

The protein resides in the cytoplasm. It is found in the cytosol. It localises to the cell membrane. Its subcellular location is the synapse. The protein localises to the synaptosome. The protein resides in the cell projection. It is found in the ruffle membrane. Functions as a calcium- and DAG-regulated nucleotide exchange factor specifically activating Rap through the exchange of bound GDP for GTP. May also activate other GTPases such as RRAS, RRAS2, NRAS, KRAS but not HRAS. Functions in aggregation of platelets and adhesion of T-lymphocytes and neutrophils probably through inside-out integrin activation. May function in the muscarinic acetylcholine receptor M1/CHRM1 signaling pathway. The polypeptide is RAS guanyl-releasing protein 2 (Rasgrp2) (Mus musculus (Mouse)).